A 373-amino-acid chain; its full sequence is Probable neutral protease 2 homolog MCYG_05201 (373 aa).

An N-terminal signal peptide occupies residues 1 to 19 (MQFFTALAAVGALVAPALA). A propeptide spanning residues 20–187 (LPTQVPANQS…AHIVGTIDKR (168 aa)) is cleaved from the precursor. Disulfide bonds link C195–C265 and C272–C290. H314 serves as a coordination point for Zn(2+). The active site involves E315. Positions 318 and 329 each coordinate Zn(2+).

It belongs to the peptidase M35 family. Zn(2+) is required as a cofactor.

The protein localises to the secreted. It catalyses the reaction Preferential cleavage of bonds with hydrophobic residues in P1'. Also 3-Asn-|-Gln-4 and 8-Gly-|-Ser-9 bonds in insulin B chain.. Its function is as follows. Probable secreted metalloprotease that shows high activities on basic nuclear substrates such as histone and protamine. May be involved in virulence. The chain is Probable neutral protease 2 homolog MCYG_05201 from Arthroderma otae (strain ATCC MYA-4605 / CBS 113480) (Microsporum canis).